We begin with the raw amino-acid sequence, 162 residues long: Transcription elongation factor GreB (162 aa).

Residues 52 to 73 (KKLLREIDRRVRYLRKRLEDVK) are a coiled coil.

Belongs to the GreA/GreB family. GreB subfamily.

Necessary for efficient RNA polymerase transcription elongation past template-encoded arresting sites. The arresting sites in DNA have the property of trapping a certain fraction of elongating RNA polymerases that pass through, resulting in locked ternary complexes. Cleavage of the nascent transcript by cleavage factors such as GreA or GreB allows the resumption of elongation from the new 3'terminus. GreB releases sequences of up to 9 nucleotides in length. In Pseudomonas putida (strain ATCC 47054 / DSM 6125 / CFBP 8728 / NCIMB 11950 / KT2440), this protein is Transcription elongation factor GreB.